A 352-amino-acid polypeptide reads, in one-letter code: uncharacterized protein (352 aa).

Residues N14, N52, and N70 are each glycosylated (N-linked (GlcNAc...) asparagine). The segment at 41–73 (LSDYKKNKDTLNNSNNNINQPFENSNNFNNNSK) is disordered. Over residues 50–72 (TLNNSNNNINQPFENSNNFNNNS) the composition is skewed to low complexity. The chain crosses the membrane as a helical span at residues 131-151 (IIFKSSGLLITLLVLYLGTFF). Residues N165, N186, N192, N193, N203, and N289 are each glycosylated (N-linked (GlcNAc...) asparagine). The segment covering 193–213 (NSSNSNNNNINNSNNNNNNNN) has biased composition (low complexity). The tract at residues 193–219 (NSSNSNNNNINNSNNNNNNNNRILSPN) is disordered.

It is found in the membrane. This is an uncharacterized protein from Dictyostelium discoideum (Social amoeba).